The primary structure comprises 334 residues: N-acetylmuramoyl-L-alanine amidase sle1 (334 aa).

Positions 1 to 25 (MQKKVIAAIIGTSAISAVAATQANA) are cleaved as a signal peptide. The 44-residue stretch at 27–70 (TTHTVKPGESVWAISNKYGISIAKLKSLNNLTSNLIFPNQVLKV) folds into the LysM 1 domain. The span at 71–86 (SGSSNSTSNSSRPSTN) shows a compositional bias: low complexity. Residues 71-90 (SGSSNSTSNSSRPSTNSGGG) are disordered. The region spanning 91–134 (SYYTVQAGDSLSLIASKYGTTYQNIMRLNGLNNFFIYPGQKLKV) is the LysM 2 domain. Residues 137-156 (TASSSNSTSNSSRPSTNSSG) are disordered. One can recognise a LysM 3 domain in the interval 158-201 (SYYTVQAGDSLSLIASKYGTTYQNIMRLNGLNNFFIYPGQKLKV). The 125-residue stretch at 210–334 (GSTTTTNRGY…YQVNNYRYIH (125 aa)) folds into the Peptidase C51 domain.

It localises to the secreted. The protein resides in the cell surface. The enzyme catalyses Hydrolyzes the link between N-acetylmuramoyl residues and L-amino acid residues in certain cell-wall glycopeptides.. Its function is as follows. Peptidoglycan hydrolase involved in the splitting of the septum during cell division. The chain is N-acetylmuramoyl-L-alanine amidase sle1 (sle1) from Staphylococcus aureus (strain MRSA252).